The following is a 544-amino-acid chain: Chaperonin GroEL (544 aa).

ATP is bound by residues Thr-30–Pro-33, Lys-51, Asp-87–Thr-91, Gly-415, Asn-479–Ala-481, and Asp-495. Low complexity predominate over residues Pro-525 to Met-537. The segment at Pro-525 to Met-544 is disordered.

This sequence belongs to the chaperonin (HSP60) family. Forms a cylinder of 14 subunits composed of two heptameric rings stacked back-to-back. Interacts with the co-chaperonin GroES.

The protein resides in the cytoplasm. The enzyme catalyses ATP + H2O + a folded polypeptide = ADP + phosphate + an unfolded polypeptide.. Functionally, together with its co-chaperonin GroES, plays an essential role in assisting protein folding. The GroEL-GroES system forms a nano-cage that allows encapsulation of the non-native substrate proteins and provides a physical environment optimized to promote and accelerate protein folding. In Ruthia magnifica subsp. Calyptogena magnifica, this protein is Chaperonin GroEL.